A 174-amino-acid chain; its full sequence is Protein C (174 aa).

It belongs to the morbillivirus protein C family.

The chain is Protein C (P/V/C) from Phocine distemper virus (PDV).